A 286-amino-acid polypeptide reads, in one-letter code: Probable xyloglucan endotransglucosylase/hydrolase protein 23 (286 aa).

An N-terminal signal peptide occupies residues 1–24; it reads MAMISYSTIVVALLASFMICSVSA. Positions 25–214 constitute a GH16 domain; the sequence is NFQRDVEITW…WSKAPFTASY (190 aa). The active-site Nucleophile is Glu100. The Proton donor role is filled by Glu104. Glu104 provides a ligand contact to xyloglucan. N-linked (GlcNAc...) asparagine glycosylation occurs at Asn108. Residues 117-119, 127-129, 193-194, and Gly198 contribute to the xyloglucan site; these read HTN, DRE, and EW. A disulfide bridge connects residues Cys222 and Cys231. Residue Asn233 is glycosylated (N-linked (GlcNAc...) asparagine). Cysteines 269 and 283 form a disulfide. A xyloglucan-binding site is contributed by Arg274.

This sequence belongs to the glycosyl hydrolase 16 family. XTH group 2 subfamily. Post-translationally, contains at least one intrachain disulfide bond essential for its enzymatic activity.

Its subcellular location is the secreted. The protein resides in the cell wall. It localises to the extracellular space. It is found in the apoplast. The catalysed reaction is breaks a beta-(1-&gt;4) bond in the backbone of a xyloglucan and transfers the xyloglucanyl segment on to O-4 of the non-reducing terminal glucose residue of an acceptor, which can be a xyloglucan or an oligosaccharide of xyloglucan.. Catalyzes xyloglucan endohydrolysis (XEH) and/or endotransglycosylation (XET). Cleaves and religates xyloglucan polymers, an essential constituent of the primary cell wall, and thereby participates in cell wall construction of growing tissues. The sequence is that of Probable xyloglucan endotransglucosylase/hydrolase protein 23 (XTH23) from Arabidopsis thaliana (Mouse-ear cress).